The following is a 142-amino-acid chain: MHSSYSHFLQRLRTSVSYLSVSHFPSTSSHRLFSTTIGVFARKKMPLLTESERTEQLSGLKTAGWKLVEGRDAIQKEFHFKDFNEAFGFMTRVGLKAEKMDHHPEWFNVYNKVDITLSTHDCGGLSPNDVKLATFIESIVKK.

This sequence belongs to the pterin-4-alpha-carbinolamine dehydratase family.

It carries out the reaction (4aS,6R)-4a-hydroxy-L-erythro-5,6,7,8-tetrahydrobiopterin = (6R)-L-erythro-6,7-dihydrobiopterin + H2O. This chain is Putative pterin-4-alpha-carbinolamine dehydratase (pcbd-1), found in Caenorhabditis elegans.